The primary structure comprises 119 residues: Small capsomere-interacting protein (119 aa).

Belongs to the herpesviridae small capsomere-interacting protein family. As to quaternary structure, interacts with the major capsid protein/MCP.

Its subcellular location is the virion. It localises to the host nucleus. Functionally, participates in the assembly of the infectious particles by decorating the outer surface of the capsid shell and thus forming a layer between the capsid and the tegument. Complexes composed of the major capsid protein and small capsomere-interacting protein/SCP assemble together in the host cytoplasm and are translocated to the nucleus, where they accumulate and participate in capsid assembly. In Equine herpesvirus 1 (strain V592) (EHV-1), this protein is Small capsomere-interacting protein.